Here is a 319-residue protein sequence, read N- to C-terminus: tRNA uridine(34) hydroxylase (319 aa).

The Rhodanese domain maps to 127 to 221 (KQEDTVIIDA…YGKDPEVQGE (95 aa)). The active-site Cysteine persulfide intermediate is cysteine 181.

The protein belongs to the TrhO family.

It carries out the reaction uridine(34) in tRNA + AH2 + O2 = 5-hydroxyuridine(34) in tRNA + A + H2O. Functionally, catalyzes oxygen-dependent 5-hydroxyuridine (ho5U) modification at position 34 in tRNAs. The polypeptide is tRNA uridine(34) hydroxylase (Bacillus mycoides (strain KBAB4) (Bacillus weihenstephanensis)).